Consider the following 372-residue polypeptide: Queuine tRNA-ribosyltransferase (372 aa).

Residue Asp89 is the Proton acceptor of the active site. Substrate-binding positions include 89-93 (DSGGF), Asp161, and Gly232. The tract at residues 262-268 (GIGDLPS) is RNA binding. Catalysis depends on Asp281, which acts as the Nucleophile. Residues 286–290 (TKAAR) are RNA binding; important for wobble base 34 recognition. Zn(2+) is bound by residues Cys319, Cys321, Cys324, and His351.

Belongs to the queuine tRNA-ribosyltransferase family. In terms of assembly, homodimer. Within each dimer, one monomer is responsible for RNA recognition and catalysis, while the other monomer binds to the replacement base PreQ1. The cofactor is Zn(2+).

The catalysed reaction is 7-aminomethyl-7-carbaguanine + guanosine(34) in tRNA = 7-aminomethyl-7-carbaguanosine(34) in tRNA + guanine. The protein operates within tRNA modification; tRNA-queuosine biosynthesis. Its function is as follows. Catalyzes the base-exchange of a guanine (G) residue with the queuine precursor 7-aminomethyl-7-deazaguanine (PreQ1) at position 34 (anticodon wobble position) in tRNAs with GU(N) anticodons (tRNA-Asp, -Asn, -His and -Tyr). Catalysis occurs through a double-displacement mechanism. The nucleophile active site attacks the C1' of nucleotide 34 to detach the guanine base from the RNA, forming a covalent enzyme-RNA intermediate. The proton acceptor active site deprotonates the incoming PreQ1, allowing a nucleophilic attack on the C1' of the ribose to form the product. After dissociation, two additional enzymatic reactions on the tRNA convert PreQ1 to queuine (Q), resulting in the hypermodified nucleoside queuosine (7-(((4,5-cis-dihydroxy-2-cyclopenten-1-yl)amino)methyl)-7-deazaguanosine). The sequence is that of Queuine tRNA-ribosyltransferase from Chlamydia trachomatis serovar L2 (strain ATCC VR-902B / DSM 19102 / 434/Bu).